The sequence spans 478 residues: Pentraxin-4 (478 aa).

The first 25 residues, 1 to 25 (MGCSWRKTLSFFLVFVPIYLHGASS), serve as a signal peptide directing secretion. N-linked (GlcNAc...) asparagine glycosylation is found at Asn-67 and Asn-91. Residues 208–222 (RDRQELRAASEHRGP) are compositionally biased toward basic and acidic residues. Positions 208–262 (RDRQELRAASEHRGPPQDSSAPLQGRREPPASGSHRVLSGTAPKDPRQQAWSPQV) are disordered. The region spanning 269–473 (VGPTLVFPNA…GFVQGANCTC (205 aa)) is the Pentraxin (PTX) domain. A disulfide bond links Cys-300 and Cys-364. Residues Asp-322, Asn-323, Glu-406, Gln-407, and Asp-408 each contribute to the Ca(2+) site.

Requires Ca(2+) as cofactor. As to expression, widely expressed at low levels with highest levels in small intestine, testis and brain. Very low expression in endothelial cells, monocytes, neutrophils and lymphocytes. Isoform 1 is not expressed in small intestine.

The protein localises to the secreted. The sequence is that of Pentraxin-4 (PTX4) from Homo sapiens (Human).